A 136-amino-acid chain; its full sequence is Nucleoside diphosphate kinase (136 aa).

The ATP site is built by lysine 10, phenylalanine 58, arginine 86, threonine 92, arginine 104, and asparagine 114. The Pros-phosphohistidine intermediate role is filled by histidine 117.

The protein belongs to the NDK family. In terms of assembly, homotetramer. The cofactor is Mg(2+).

The protein resides in the cytoplasm. The enzyme catalyses a 2'-deoxyribonucleoside 5'-diphosphate + ATP = a 2'-deoxyribonucleoside 5'-triphosphate + ADP. It catalyses the reaction a ribonucleoside 5'-diphosphate + ATP = a ribonucleoside 5'-triphosphate + ADP. Functionally, major role in the synthesis of nucleoside triphosphates other than ATP. The ATP gamma phosphate is transferred to the NDP beta phosphate via a ping-pong mechanism, using a phosphorylated active-site intermediate. The protein is Nucleoside diphosphate kinase of Mycolicibacterium paratuberculosis (strain ATCC BAA-968 / K-10) (Mycobacterium paratuberculosis).